Reading from the N-terminus, the 879-residue chain is Alanine--tRNA ligase (879 aa).

Zn(2+) is bound by residues His566, His570, Cys668, and His672.

It belongs to the class-II aminoacyl-tRNA synthetase family. Zn(2+) serves as cofactor.

Its subcellular location is the cytoplasm. The catalysed reaction is tRNA(Ala) + L-alanine + ATP = L-alanyl-tRNA(Ala) + AMP + diphosphate. Its function is as follows. Catalyzes the attachment of alanine to tRNA(Ala) in a two-step reaction: alanine is first activated by ATP to form Ala-AMP and then transferred to the acceptor end of tRNA(Ala). Also edits incorrectly charged Ser-tRNA(Ala) and Gly-tRNA(Ala) via its editing domain. The polypeptide is Alanine--tRNA ligase (Clostridium novyi (strain NT)).